A 277-amino-acid polypeptide reads, in one-letter code: ATP synthase subunit delta (277 aa).

It belongs to the ATPase delta chain family. F-type ATPases have 2 components, F(1) - the catalytic core - and F(0) - the membrane proton channel. F(1) has five subunits: alpha(3), beta(3), gamma(1), delta(1), epsilon(1). F(0) has three main subunits: a(1), b(2) and c(10-14). The alpha and beta chains form an alternating ring which encloses part of the gamma chain. F(1) is attached to F(0) by a central stalk formed by the gamma and epsilon chains, while a peripheral stalk is formed by the delta and b chains.

The protein resides in the cell membrane. In terms of biological role, f(1)F(0) ATP synthase produces ATP from ADP in the presence of a proton or sodium gradient. F-type ATPases consist of two structural domains, F(1) containing the extramembraneous catalytic core and F(0) containing the membrane proton channel, linked together by a central stalk and a peripheral stalk. During catalysis, ATP synthesis in the catalytic domain of F(1) is coupled via a rotary mechanism of the central stalk subunits to proton translocation. This protein is part of the stalk that links CF(0) to CF(1). It either transmits conformational changes from CF(0) to CF(1) or is implicated in proton conduction. This chain is ATP synthase subunit delta, found in Bifidobacterium animalis subsp. lactis (strain AD011).